The chain runs to 381 residues: Gas vesicle protein C (381 aa).

A run of 7 repeats spans residues Gln22–Asn59, Asp60–Arg84, Asp85–His122, Glu123–Gln160, Gly161–Ala192, Asp193–Glu232, and Glu233–Ile274. The interval Gln22–Ile274 is 7 X approximate tandem repeats. Residues Ala261–Thr333 are disordered. The span at Asp276–Gln318 shows a compositional bias: acidic residues.

This sequence belongs to the halobacterial gas vesicle GvpC family. Post-translationally, detected as 2 slightly different sizes in vivo; the proteins appears larger in SDS-PAGE probably due to the acidic tail.

Its subcellular location is the gas vesicle. Its function is as follows. Confers stability, involved in shaping gas vesicles (GV), hollow, gas filled proteinaceous nanostructures found in some microorganisms. They allow positioning of halobacteria at the optimal depth for growth in the poorly aerated, shallow brine pools of their habitat. Expression of a 9.5 kb mc-vac DNA fragment containing 2 divergently transcribed regions (gvpD-gvpE-gvpF-gvpG-gvpH-gvpI-gvpJ-gvpK-gvpL-gvpM and gvpA-gvpC-gvpN-gvpO) allows H.volcanii to produce gas vesicles. The chain is Gas vesicle protein C from Haloferax mediterranei (strain ATCC 33500 / DSM 1411 / JCM 8866 / NBRC 14739 / NCIMB 2177 / R-4) (Halobacterium mediterranei).